We begin with the raw amino-acid sequence, 591 residues long: DEAD-box ATP-dependent RNA helicase 35 (591 aa).

A Q motif motif is present at residues 146 to 174 (KNFKDMKFPRPVLDTLKEKGIVQPTPIQV). One can recognise a Helicase ATP-binding domain in the interval 177–361 (LPVILAGRDM…RSALVKPVTV (185 aa)). 190–197 (AFTGSGKT) contacts ATP. The short motif at 309–312 (DEAD) is the DEAD box element. Positions 372–532 (DVIQEVEYVK…RIPPVLAELN (161 aa)) constitute a Helicase C-terminal domain. The CCHC-type zinc-finger motif lies at 548-565 (KGCAYCGGLGHRIRDCPK).

The protein belongs to the DEAD box helicase family. DDX41 subfamily.

The catalysed reaction is ATP + H2O = ADP + phosphate + H(+). This is DEAD-box ATP-dependent RNA helicase 35 (RH35) from Arabidopsis thaliana (Mouse-ear cress).